The following is a 611-amino-acid chain: Protein Pixie (611 aa).

2 consecutive 4Fe-4S ferredoxin-type domains span residues 15–45 (RIAI…MGKL) and 54–83 (KIAS…IINL). 2 ABC transporter domains span residues 78 to 323 (ITII…FLDG) and 350 to 570 (IKRM…LELL). ATP contacts are provided by residues 118-125 (GQNGIGKS) and 387-394 (GENGTGKT).

It belongs to the ABC transporter superfamily. ABCE family. In terms of assembly, interacts with components of eIF3 complex, namely eIF3a, eIF3j, eIF3b, eIF3c and eIF3i. Associates with the 40S ribosome subunit in an ATP-dependent manner and independently from the presence of the eIF3 complex. Forms a complex with Git and Pak; the interaction with Pak may be mediated by pix/dPIX. Ubiquitinated by Cnot4. Ubiquitination mediates the recruitment of autophagy receptors to the mitochondrial outer membrane and initiates mitophagy. Expressed in early and late larval imaginal disks (at protein level).

The protein resides in the cytoplasm. In terms of biological role, plays a role in translation initiation and quality control of translation. Together with pelo and HBS1, is required for 48S complex formation from 80S ribosomes and dissociation of vacant 80S ribosomes. Stabilizes core components of eIF3 complex promoting their assembly into translation initiation-competent complexes. Together with pelo and HBS1, recognizes stalled ribosomes and promotes dissociation of elongation complexes assembled on non-stop mRNAs; this triggers endonucleolytic cleavage of the mRNA, a mechanism to release non-functional ribosomes and to degrade damaged mRNAs as part of the No-Go Decay (NGD) pathway. Plays a role in the regulation of mRNA turnover. Plays a role in quality control of translation of mitochondrial outer membrane-localized mRNA. As part of the Pink1-regulated signaling, ubiquitinated by Cnot4 upon mitochondria damage; this modification generates polyubiquitin signals that recruits autophagy receptors to the mitochondrial outer membrane to initiate mitophagy. Required in the wing disk for cell division and growth as well as cell survival. During muscle embryogenesis, required for the recruitment of Pak to muscle attachments in the embryo, hence may play a role in proper muscle morphogenesis and proper guidance and targeting of subsets of myotubes. In Drosophila melanogaster (Fruit fly), this protein is Protein Pixie.